The chain runs to 444 residues: Magnesium transporter MRS2-F (444 aa).

Positions phenylalanine 128–methionine 155 are disordered. The span at leucine 145–methionine 155 shows a compositional bias: polar residues. Residues valine 195–leucine 258 are a coiled coil. Residues glycine 370 to phenylalanine 390 form a helical membrane-spanning segment. Residues glycine 391–asparagine 393 carry the Required for magnesium transport activity motif. Residues phenylalanine 415 to glycine 435 form a helical membrane-spanning segment.

The protein belongs to the CorA metal ion transporter (MIT) (TC 1.A.35.5) family.

It localises to the membrane. Magnesium transporter that may mediate the influx of magnesium. The chain is Magnesium transporter MRS2-F (MRS2-F) from Oryza sativa subsp. indica (Rice).